The primary structure comprises 827 residues: DNA gyrase subunit A (827 aa).

A Topo IIA-type catalytic domain is found at L38–L501. Y126 (O-(5'-phospho-DNA)-tyrosine intermediate) is an active-site residue. Positions Q528–G534 match the GyrA-box motif.

The protein belongs to the type II topoisomerase GyrA/ParC subunit family. As to quaternary structure, heterotetramer, composed of two GyrA and two GyrB chains. In the heterotetramer, GyrA contains the active site tyrosine that forms a transient covalent intermediate with DNA, while GyrB binds cofactors and catalyzes ATP hydrolysis.

It is found in the cytoplasm. The catalysed reaction is ATP-dependent breakage, passage and rejoining of double-stranded DNA.. In terms of biological role, a type II topoisomerase that negatively supercoils closed circular double-stranded (ds) DNA in an ATP-dependent manner to modulate DNA topology and maintain chromosomes in an underwound state. Negative supercoiling favors strand separation, and DNA replication, transcription, recombination and repair, all of which involve strand separation. Also able to catalyze the interconversion of other topological isomers of dsDNA rings, including catenanes and knotted rings. Type II topoisomerases break and join 2 DNA strands simultaneously in an ATP-dependent manner. The sequence is that of DNA gyrase subunit A from Helicobacter pylori (strain ATCC 700392 / 26695) (Campylobacter pylori).